A 788-amino-acid chain; its full sequence is Glucan 1,3-beta-glucosidase (788 aa).

An N-terminal signal peptide occupies residues 1 to 42 (MRFSSLLACLGAVGIQAAAIPFQRRVDNTTDSGSLDAAQAAA). Asn28, Asn233, Asn381, and Asn773 each carry an N-linked (GlcNAc...) asparagine glycan.

Belongs to the glycosyl hydrolase 55 family.

It carries out the reaction Successive hydrolysis of beta-D-glucose units from the non-reducing ends of (1-&gt;3)-beta-D-glucans, releasing alpha-glucose.. The polypeptide is Glucan 1,3-beta-glucosidase (EXG1) (Cochliobolus carbonum (Maize leaf spot fungus)).